We begin with the raw amino-acid sequence, 154 residues long: uncharacterized protein (154 aa).

The region spanning 13–128 (SKGVLLLRTL…VFTFVAVDNN (116 aa)) is the HotDog ACOT-type domain.

This sequence belongs to the acyl coenzyme A hydrolase family.

This is an uncharacterized protein from Haemophilus influenzae (strain ATCC 51907 / DSM 11121 / KW20 / Rd).